We begin with the raw amino-acid sequence, 147 residues long: Small ribosomal subunit protein uS12 (147 aa).

Belongs to the universal ribosomal protein uS12 family. As to quaternary structure, part of the 30S ribosomal subunit.

Functionally, with S4 and S5 plays an important role in translational accuracy. Located at the interface of the 30S and 50S subunits. This Sulfolobus acidocaldarius (strain ATCC 33909 / DSM 639 / JCM 8929 / NBRC 15157 / NCIMB 11770) protein is Small ribosomal subunit protein uS12.